The chain runs to 488 residues: Ribosomal protein uS12 methylthiotransferase RimO (488 aa).

Residues 4-120 (RKVHFVSLGC…LGRVLAGDAE (117 aa)) form the MTTase N-terminal domain. Residues Cys13, Cys49, Cys83, Cys155, Cys159, and Cys162 each contribute to the [4Fe-4S] cluster site. Residues 141–377 (STPGGSAYVK…MTLQRRISHK (237 aa)) form the Radical SAM core domain. Residues 380–448 (AAMIGRELEV…DYDLVGELLD (69 aa)) enclose the TRAM domain.

The protein belongs to the methylthiotransferase family. RimO subfamily. The cofactor is [4Fe-4S] cluster.

It localises to the cytoplasm. The catalysed reaction is L-aspartate(89)-[ribosomal protein uS12]-hydrogen + (sulfur carrier)-SH + AH2 + 2 S-adenosyl-L-methionine = 3-methylsulfanyl-L-aspartate(89)-[ribosomal protein uS12]-hydrogen + (sulfur carrier)-H + 5'-deoxyadenosine + L-methionine + A + S-adenosyl-L-homocysteine + 2 H(+). Functionally, catalyzes the methylthiolation of an aspartic acid residue of ribosomal protein uS12. The chain is Ribosomal protein uS12 methylthiotransferase RimO from Sorangium cellulosum (strain So ce56) (Polyangium cellulosum (strain So ce56)).